A 419-amino-acid polypeptide reads, in one-letter code: Serine--tRNA ligase (419 aa).

The segment at 45 to 66 (ADSLRAEQKAASKSVGGASPEE) is disordered. 226–228 (TSE) is an L-serine binding site. ATP-binding positions include 257–259 (RRE) and valine 273. Glutamate 280 serves as a coordination point for L-serine. 344–347 (ELTS) contacts ATP. Residue threonine 379 coordinates L-serine.

It belongs to the class-II aminoacyl-tRNA synthetase family. Type-1 seryl-tRNA synthetase subfamily. As to quaternary structure, homodimer. The tRNA molecule binds across the dimer.

It is found in the cytoplasm. The catalysed reaction is tRNA(Ser) + L-serine + ATP = L-seryl-tRNA(Ser) + AMP + diphosphate + H(+). It carries out the reaction tRNA(Sec) + L-serine + ATP = L-seryl-tRNA(Sec) + AMP + diphosphate + H(+). It participates in aminoacyl-tRNA biosynthesis; selenocysteinyl-tRNA(Sec) biosynthesis; L-seryl-tRNA(Sec) from L-serine and tRNA(Sec): step 1/1. Catalyzes the attachment of serine to tRNA(Ser). Is also able to aminoacylate tRNA(Sec) with serine, to form the misacylated tRNA L-seryl-tRNA(Sec), which will be further converted into selenocysteinyl-tRNA(Sec). The chain is Serine--tRNA ligase from Mycobacterium ulcerans (strain Agy99).